The sequence spans 370 residues: Quinolinate synthase (370 aa).

Iminosuccinate contacts are provided by H62 and S83. Residue C128 coordinates [4Fe-4S] cluster. Residues 154–156 (YAN) and S171 each bind iminosuccinate. C215 contributes to the [4Fe-4S] cluster binding site. Residues 241 to 243 (HPE) and T258 each bind iminosuccinate. Position 312 (C312) interacts with [4Fe-4S] cluster.

Belongs to the quinolinate synthase family. Type 1 subfamily. [4Fe-4S] cluster serves as cofactor.

Its subcellular location is the cytoplasm. The enzyme catalyses iminosuccinate + dihydroxyacetone phosphate = quinolinate + phosphate + 2 H2O + H(+). The protein operates within cofactor biosynthesis; NAD(+) biosynthesis; quinolinate from iminoaspartate: step 1/1. Its function is as follows. Catalyzes the condensation of iminoaspartate with dihydroxyacetone phosphate to form quinolinate. This chain is Quinolinate synthase, found in Neisseria gonorrhoeae (strain ATCC 700825 / FA 1090).